The sequence spans 356 residues: DNA-directed RNA polymerase subunit alpha (356 aa).

Residues 1 to 259 form an alpha N-terminal domain (alpha-NTD) region; sequence MIKAAATLKS…KLMTACLTTL (259 aa). The interval 277–356 is alpha C-terminal domain (alpha-CTD); it reads FVQVNYNKME…STYGIELKED (80 aa).

It belongs to the RNA polymerase alpha chain family. In terms of assembly, in plastids the minimal PEP RNA polymerase catalytic core is composed of four subunits: alpha, beta, beta', and beta''. When a (nuclear-encoded) sigma factor is associated with the core the holoenzyme is formed, which can initiate transcription.

The protein localises to the plastid. The protein resides in the chloroplast. It catalyses the reaction RNA(n) + a ribonucleoside 5'-triphosphate = RNA(n+1) + diphosphate. DNA-dependent RNA polymerase catalyzes the transcription of DNA into RNA using the four ribonucleoside triphosphates as substrates. The protein is DNA-directed RNA polymerase subunit alpha of Ostreococcus tauri.